The sequence spans 234 residues: RNA-binding protein pno1 (234 aa).

The disordered stretch occupies residues 1–39 (MPTQDSAAKQADDGFQLVQKKSRKRKMTMDMDDADPKAG). The 50-residue stretch at 158-207 (LARCIGRLAGKGGRTKFTIENVTKTRIVLADSKVHILGSYQNIRAARTAL) folds into the KH domain.

Belongs to the PNO1 family.

It localises to the nucleus. The protein localises to the nucleolus. This Ixodes scapularis (Black-legged tick) protein is RNA-binding protein pno1.